The primary structure comprises 342 residues: Galactose mutarotase (342 aa).

Beta-D-galactose contacts are provided by residues 81 to 82 and His-107; that span reads NR. Ser-124 carries the post-translational modification Phosphoserine. The active-site Proton donor is His-176. Beta-D-galactose is bound by residues 176-178, Asp-243, Gln-279, and Glu-307; that span reads HSY. Residue Glu-307 is the Proton acceptor of the active site.

This sequence belongs to the aldose epimerase family. As to quaternary structure, monomer.

The protein resides in the cytoplasm. The catalysed reaction is alpha-D-galactose = beta-D-galactose. The enzyme catalyses alpha-D-glucose = beta-D-glucose. It functions in the pathway carbohydrate metabolism; hexose metabolism. The protein operates within carbohydrate metabolism; galactose metabolism. Mutarotase that catalyzes the interconversion of beta-D-galactose and alpha-D-galactose during galactose metabolism. Beta-D-galactose is metabolized in the liver into glucose 1-phosphate, the primary metabolic fuel, by the action of four enzymes that constitute the Leloir pathway: GALM, GALK1 (galactokinase), GALT (galactose-1-phosphate uridylyltransferase) and GALE (UDP-galactose-4'-epimerase). Involved in the maintenance of the equilibrium between the beta- and alpha-anomers of galactose, therefore ensuring a sufficient supply of the alpha-anomer for GALK1. Also active on D-glucose although shows a preference for galactose over glucose. In Bos taurus (Bovine), this protein is Galactose mutarotase (GALM).